Reading from the N-terminus, the 249-residue chain is UPF0758 protein Oant_1909 (249 aa).

An MPN domain is found at Val-127 to Ile-249. The Zn(2+) site is built by His-198, His-200, and Asp-211. The short motif at His-198–Asp-211 is the JAMM motif element.

The protein belongs to the UPF0758 family.

The chain is UPF0758 protein Oant_1909 from Brucella anthropi (strain ATCC 49188 / DSM 6882 / CCUG 24695 / JCM 21032 / LMG 3331 / NBRC 15819 / NCTC 12168 / Alc 37) (Ochrobactrum anthropi).